Consider the following 399-residue polypeptide: Succinate--CoA ligase [ADP-forming] subunit beta (399 aa).

One can recognise an ATP-grasp domain in the interval 9–254; it reads KAVLAEFGAP…ESEEDPKEIE (246 aa). ATP-binding positions include K46, 53-55, E109, A112, and E117; that span reads GRG. N209 and D223 together coordinate Mg(2+). Substrate is bound by residues N274 and 331 to 333; that span reads GIM.

Belongs to the succinate/malate CoA ligase beta subunit family. In terms of assembly, heterotetramer of two alpha and two beta subunits. Mg(2+) serves as cofactor.

The catalysed reaction is succinate + ATP + CoA = succinyl-CoA + ADP + phosphate. The enzyme catalyses GTP + succinate + CoA = succinyl-CoA + GDP + phosphate. The protein operates within carbohydrate metabolism; tricarboxylic acid cycle; succinate from succinyl-CoA (ligase route): step 1/1. In terms of biological role, succinyl-CoA synthetase functions in the citric acid cycle (TCA), coupling the hydrolysis of succinyl-CoA to the synthesis of either ATP or GTP and thus represents the only step of substrate-level phosphorylation in the TCA. The beta subunit provides nucleotide specificity of the enzyme and binds the substrate succinate, while the binding sites for coenzyme A and phosphate are found in the alpha subunit. This is Succinate--CoA ligase [ADP-forming] subunit beta from Caulobacter sp. (strain K31).